Consider the following 137-residue polypeptide: Small ribosomal subunit protein uS9 (137 aa).

Positions 105–137 (LKTEGYLKRDPRAVERKKYGLRKARKAPQYSKR) are disordered. Residues 109–122 (GYLKRDPRAVERKK) show a composition bias toward basic and acidic residues. Residues 123–137 (YGLRKARKAPQYSKR) are compositionally biased toward basic residues.

Belongs to the universal ribosomal protein uS9 family.

The polypeptide is Small ribosomal subunit protein uS9 (Synechococcus sp. (strain JA-3-3Ab) (Cyanobacteria bacterium Yellowstone A-Prime)).